The sequence spans 263 residues: L-aspartate dehydrogenase (263 aa).

NAD(+) contacts are provided by Ala-120 and Asn-186. The active site involves His-216.

The protein belongs to the L-aspartate dehydrogenase family.

It catalyses the reaction L-aspartate + NADP(+) + H2O = oxaloacetate + NH4(+) + NADPH + H(+). It carries out the reaction L-aspartate + NAD(+) + H2O = oxaloacetate + NH4(+) + NADH + H(+). The protein operates within cofactor biosynthesis; NAD(+) biosynthesis; iminoaspartate from L-aspartate (dehydrogenase route): step 1/1. In terms of biological role, specifically catalyzes the NAD or NADP-dependent dehydrogenation of L-aspartate to iminoaspartate. The protein is L-aspartate dehydrogenase of Acinetobacter baylyi (strain ATCC 33305 / BD413 / ADP1).